A 1116-amino-acid chain; its full sequence is Pleckstrin homology domain-containing family A member 5 (1116 aa).

Ala-2 bears the N-acetylalanine mark. One can recognise a WW 1 domain in the interval 10–43 (ISLPRSWTYGITRGGRVFFINEEAKSTTWLHPVT). Phosphoserine is present on Ser-55. Residues 56-89 (TDLPTGWEEAYTFEGARYYINHNERKVTCKHPVT) enclose the WW 2 domain. Residues 140 to 163 (SPVGRTSRASKKVHNFGKRSNSIK) form a disordered region. Over residues 147–156 (RASKKVHNFG) the composition is skewed to basic residues. The PH domain maps to 169–268 (PVVRRGWLYK…WMKAMLDAAL (100 aa)). Lys-301 participates in a covalent cross-link: Glycyl lysine isopeptide (Lys-Gly) (interchain with G-Cter in SUMO2). Residues Ser-382 and Ser-410 each carry the phosphoserine modification. 2 positions are modified to phosphothreonine: Thr-438 and Thr-460. The segment at 459–495 (RTLPRNSKTRPESICSVTPSTHDKTLGPGAEEKRRSM) is disordered. Over residues 479-495 (THDKTLGPGAEEKRRSM) the composition is skewed to basic and acidic residues. Phosphoserine occurs at positions 568, 607, 809, 855, 933, and 937. Disordered stretches follow at residues 928-978 (GASD…PATE) and 1025-1116 (RNKD…FMCV). Residues 930–949 (SDQSPLQSPSNLRDNPFRTT) are compositionally biased toward polar residues. The span at 952–978 (RRRDDKELDTAIRENDVKPDHETPATE) shows a compositional bias: basic and acidic residues. Polar residues predominate over residues 1036-1046 (FSPQDETQTAN). Residues 1047–1061 (HKPEEHPEENTKNSV) show a composition bias toward basic and acidic residues. Polar residues predominate over residues 1070–1085 (SYESTPEVSRGNQTMA). Residues 1088 to 1101 (SLSPSPESSASPVP) are compositionally biased toward low complexity.

Highly expressed in heart and kidney.

It is found in the cytoplasm. The protein is Pleckstrin homology domain-containing family A member 5 (PLEKHA5) of Homo sapiens (Human).